Reading from the N-terminus, the 141-residue chain is Hemoglobin subunit alpha-1/2 (141 aa).

Residues 1-141 (VLSPADKTNV…VSTVLTSKYR (141 aa)) enclose the Globin domain. S3 carries the post-translational modification Phosphoserine. N6-succinyllysine is present on K7. The residue at position 8 (T8) is a Phosphothreonine. Residue K11 is modified to N6-succinyllysine. An N6-acetyllysine; alternate modification is found at K16. Position 16 is an N6-succinyllysine; alternate (K16). A Phosphotyrosine modification is found at Y24. S35 bears the Phosphoserine mark. Position 40 is an N6-succinyllysine (K40). S49 carries the post-translational modification Phosphoserine. H58 contacts O2. H87 contributes to the heme b binding site. S102 is modified (phosphoserine). At T108 the chain carries Phosphothreonine. Phosphoserine occurs at positions 124 and 131. Phosphothreonine occurs at positions 134 and 137. Residue S138 is modified to Phosphoserine.

It belongs to the globin family. As to quaternary structure, heterotetramer of two alpha chains and two beta chains. Red blood cells.

Functionally, involved in oxygen transport from the lung to the various peripheral tissues. This is Hemoglobin subunit alpha-1/2 from Macaca sinica (Toque macaque).